The chain runs to 182 residues: Fatty-acid and retinol-binding protein 1 (182 aa).

The N-terminal stretch at 1 to 17 (MIRATIILAAVAALAFS) is a signal peptide. The stretch at 86–106 (EKASKLHQIVKDKVNALNDEA) forms a coiled coil.

This sequence belongs to the fatty-acid and retinol-binding protein (FARBP) family.

Its subcellular location is the secreted. Probably binds lipids. This Caenorhabditis elegans protein is Fatty-acid and retinol-binding protein 1 (far-1).